Here is a 495-residue protein sequence, read N- to C-terminus: Cytochrome P450 94C1 (495 aa).

The helical transmembrane segment at 2-22 (LLIISFTIVSFFFIIIFSLFH) threads the bilayer. Cys439 is a heme binding site.

This sequence belongs to the cytochrome P450 family. The cofactor is heme.

The protein localises to the membrane. The protein resides in the endoplasmic reticulum membrane. It catalyses the reaction a 12-hydroxyjasmonyl-L-alpha-amino acid + 2 reduced [NADPH--hemoprotein reductase] + 2 O2 = a 12-hydroxy-12-oxojasmonyl-L-alpha-amino acid + 2 oxidized [NADPH--hemoprotein reductase] + 3 H2O + 3 H(+). Functionally, involved in the oxidation of the plant hormone jasmonoyl-L-isoleucine (JA-Ile), a bioactive phytohormone of the jasmonate-mediated signaling pathway. Converts 12-hydroxy-JA-Ile (12OH-JA-Ile) to the carboxy-derivative 12COOH-JA-Ile. Exerts negative feedback control on JA-Ile levels and plays a role in attenuation of jasmonate responses. Also functions as in-chain fatty acids hydroxylase in vitro. Catalyzes the hydroxylation of 12-hydroxy-jasmonoyl-L-phenylalanine (12OH-JA-Phe) in vitro. Converts 12OH-JA-Phe to the carboxy-derivative 12COOH-JA-Phe. This is Cytochrome P450 94C1 from Arabidopsis thaliana (Mouse-ear cress).